Reading from the N-terminus, the 146-residue chain is MRVVLQRSKEASVTVDGEIVGQIPFGLTLLVGITHEDTEKDATYIAEKIANLRIFEDESGKMNHSVLDVEGQVLSISQFTLYGDCRKGRRPNFMDAAKPDYAERLYDFFNEEVRKQGLHVETGKFGAMMDVSLINDGPVTLIVESK.

The Gly-cisPro motif, important for rejection of L-amino acids motif lies at 137-138 (GP).

Belongs to the DTD family. In terms of assembly, homodimer.

The protein localises to the cytoplasm. The catalysed reaction is glycyl-tRNA(Ala) + H2O = tRNA(Ala) + glycine + H(+). The enzyme catalyses a D-aminoacyl-tRNA + H2O = a tRNA + a D-alpha-amino acid + H(+). In terms of biological role, an aminoacyl-tRNA editing enzyme that deacylates mischarged D-aminoacyl-tRNAs. Also deacylates mischarged glycyl-tRNA(Ala), protecting cells against glycine mischarging by AlaRS. Acts via tRNA-based rather than protein-based catalysis; rejects L-amino acids rather than detecting D-amino acids in the active site. By recycling D-aminoacyl-tRNA to D-amino acids and free tRNA molecules, this enzyme counteracts the toxicity associated with the formation of D-aminoacyl-tRNA entities in vivo and helps enforce protein L-homochirality. This Bacillus cereus (strain Q1) protein is D-aminoacyl-tRNA deacylase.